The chain runs to 219 residues: Uracil-DNA glycosylase (219 aa).

The Proton acceptor role is filled by D61.

This sequence belongs to the uracil-DNA glycosylase (UDG) superfamily. UNG family.

It is found in the cytoplasm. The catalysed reaction is Hydrolyzes single-stranded DNA or mismatched double-stranded DNA and polynucleotides, releasing free uracil.. Its function is as follows. Excises uracil residues from the DNA which can arise as a result of misincorporation of dUMP residues by DNA polymerase or due to deamination of cytosine. The sequence is that of Uracil-DNA glycosylase from Neisseria meningitidis serogroup A / serotype 4A (strain DSM 15465 / Z2491).